The chain runs to 339 residues: Dihydroorotate dehydrogenase (quinone) (339 aa).

FMN is bound by residues 62-66 (AGMDK) and T86. Residue K66 participates in substrate binding. 111–115 (NRMGF) contributes to the substrate binding site. N139 and N172 together coordinate FMN. N172 contacts substrate. S175 serves as the catalytic Nucleophile. Residue N177 participates in substrate binding. K217 and T245 together coordinate FMN. 246–247 (NT) lines the substrate pocket. FMN is bound by residues G268, G297, and 318–319 (YS).

It belongs to the dihydroorotate dehydrogenase family. Type 2 subfamily. In terms of assembly, monomer. Requires FMN as cofactor.

Its subcellular location is the cell membrane. It catalyses the reaction (S)-dihydroorotate + a quinone = orotate + a quinol. It participates in pyrimidine metabolism; UMP biosynthesis via de novo pathway; orotate from (S)-dihydroorotate (quinone route): step 1/1. Functionally, catalyzes the conversion of dihydroorotate to orotate with quinone as electron acceptor. The polypeptide is Dihydroorotate dehydrogenase (quinone) (Shewanella piezotolerans (strain WP3 / JCM 13877)).